The sequence spans 296 residues: GTPase Era (296 aa).

The region spanning 7 to 174 is the Era-type G domain; sequence RAGFVAIVGR…LDEIAAGLPQ (168 aa). Residues 15–22 are G1; sequence GRPNVGKS. 15-22 is a GTP binding site; the sequence is GRPNVGKS. A G2 region spans residues 41–45; it reads QTTRH. The segment at 62–65 is G3; the sequence is DTPG. GTP is bound by residues 62-66 and 123-126; these read DTPGF and SKID. Positions 123–126 are G4; sequence SKID. Positions 153–155 are G5; it reads VSA. A KH type-2 domain is found at 205-281; it reads VGDELPYGCT…HLEIYIKVRK (77 aa).

This sequence belongs to the TRAFAC class TrmE-Era-EngA-EngB-Septin-like GTPase superfamily. Era GTPase family. In terms of assembly, monomer.

The protein localises to the cytoplasm. Its subcellular location is the cell inner membrane. Its function is as follows. An essential GTPase that binds both GDP and GTP, with rapid nucleotide exchange. Plays a role in 16S rRNA processing and 30S ribosomal subunit biogenesis and possibly also in cell cycle regulation and energy metabolism. The protein is GTPase Era of Bordetella parapertussis (strain 12822 / ATCC BAA-587 / NCTC 13253).